The primary structure comprises 263 residues: Small ribosomal subunit protein eS4 (263 aa).

Residues 42 to 104 enclose the S4 RNA-binding domain; the sequence is LPLVIFLRNR…TNELFRLIYD (63 aa).

It belongs to the eukaryotic ribosomal protein eS4 family.

The polypeptide is Small ribosomal subunit protein eS4 (RpS4) (Spodoptera frugiperda (Fall armyworm)).